We begin with the raw amino-acid sequence, 406 residues long: Tubby-like F-box protein 11 (406 aa).

The 56-residue stretch at 53–108 (SCWTQLPPELLREVLARVEESEGWWPRRRDVVACAGVCRSWRGIVREIVRTPEASG) folds into the F-box domain.

The protein belongs to the TUB family. Ubiquitous.

This is Tubby-like F-box protein 11 (TULP11) from Oryza sativa subsp. japonica (Rice).